The sequence spans 49 residues: YLDHGLGAPAPYVDPLEPKREVCELNPDCDELADQMGFQEAYRRFYGTT.

A Gla domain is found at 1–47 (YLDHGLGAPAPYVDPLEPKREVCELNPDCDELADQMGFQEAYRRFYG). At P9 the chain carries 4-hydroxyproline. Positions 17, 21, 24, and 30 each coordinate Ca(2+). 4-carboxyglutamate is present on residues E17, E21, and E24. A disulfide bond links C23 and C29.

This sequence belongs to the osteocalcin/matrix Gla protein family. Post-translationally, gamma-carboxyglutamic acid residues are formed by vitamin K dependent carboxylation. These residues are essential for the binding of calcium.

It is found in the secreted. The carboxylated form is one of the main organic components of the bone matrix, which constitutes 1-2% of the total bone protein: it acts as a negative regulator of bone formation and is required to limit bone formation without impairing bone resorption or mineralization. The carboxylated form binds strongly to apatite and calcium. In terms of biological role, the uncarboxylated form acts as a hormone secreted by osteoblasts, which regulates different cellular processes, such as energy metabolism, male fertility and brain development. Regulates of energy metabolism by acting as a hormone favoring pancreatic beta-cell proliferation, insulin secretion and sensitivity and energy expenditure. Uncarboxylated osteocalcin hormone also promotes testosterone production in the testes: acts as a ligand for G protein-coupled receptor GPRC6A at the surface of Leydig cells, initiating a signaling response that promotes the expression of enzymes required for testosterone synthesis in a CREB-dependent manner. Also acts as a regulator of brain development: osteocalcin hormone crosses the blood-brain barrier and acts as a ligand for GPR158 on neurons, initiating a signaling response that prevents neuronal apoptosis in the hippocampus, favors the synthesis of all monoamine neurotransmitters and inhibits that of gamma-aminobutyric acid (GABA). Osteocalcin also crosses the placenta during pregnancy and maternal osteocalcin is required for fetal brain development. The chain is Osteocalcin from Lama guanicoe (Guanaco).